The chain runs to 1385 residues: MRVLVHVNNAKQSGDGANNSNGTLINYNSNNKLFLEIHPNQSIWMIKTLLFNLFQIPPARQQLYLKVVDEINPRETSKAYSKLLQSYRLVKDYKIYEGTELQMVALEKEIPSEFLVPPKKTQSNSMEKLPHFTNLSMSSMSNMDEILSGSGGGRIHVLSSKKGEECPALCFAVGKGLYRGISGVIYEIKLYRVDSKGMLIVNTSLNFQIDVIKKDSISVEDRKMAFTYEQRKSDYSLLKLQPIIYGEYSISIKIDDTPICGSPFHCTIIDELNPNLKELAFSNEWIEEVVQLITLMSNKPSTIDKLFSFGIEGLMNLMFYPDPTIQIHIIGIFAKLIEKDKNKERVLKEFGMDFIFKLVSLDNWSNFMELRKLVASSLCILSCYKPFLNRFFKEVGIDVISLIARSDFIDCPRSCAIFLSRVSEISFELNEYLISDSIKETLIYLLSIQDNITVNCTLKTISNLSSSFDLKKESNIKLLSNLLEYCKEFQEISKKVLIFKSFSNFCVNESLCTFLISNGILDLITPTHDKSGYFGIPMFCQWESNTINYIISNNNEINLKQYGYEFNQIFKEETDYVFFLSLTISNMLVSTTSLKIHDHFSRGNGLNLLKQFIICHECSVRSEAFRSFMIISNSPNDQCKKHLIQSGIIPYLVSSLFDSLSVETPFIVNTLANLCKYDPTCVENMGVDDIDKFIELLHRDSTSSLSKSISYILSHLIRHDKYKQRIVNGGGKLFLQYLIEFVRQGEISVLKYISQSDLELTKEIGRGVSGVVKRGKWKGYEIAVKQFNEEELGFSEREFHSEATIMSVLRHDNIVHCVGGSAQPGKMYLVCDYYSRGSLYSVITANICPLSNARIVHLALQVAKGMNYLHSLGIIHRDLKPGNLLIDQDWNIRISDFGLSRVVDNRMTKTVGTPCYMAVEVLKGLTDYSQQADVYSFAFVLWECISRQIPYKDFAQIQWISMVLEDSFRPPIPDSCLPEFRDLITMCWTSNPDDRPSFQQIITYLENLRLKMQDQGIYQILTGGSSVGIGGVGVVGVGSGGNSDEHESNIDIDTVSGSNNNESSTAVSLNENKINIDMSMHPTEELKNLVEVSKDDNPTNSDYDIRSSSTSSSPSTLSAPQSPVGSTSPMGSTSTSPISNNNNRPTHDHQQPHQVKWERIVPDKPNPNLKSKRLSAFRNKAVPISITDNNNNNNSANNNNNNNSMKNNSNASRNTFSSVSSPSSSADLSSGIESSNNRDDSFLSSGSSLSEQHRSVSNSVSNSVGGFSLPPPPLAPSFYASMINEKISSSTPTDNNNNNNNNNNNNNNNNNNNNNNNNNNNNNNNNNNSNNSINNNNNNGIAINYTNSINNNKNSNNNTSNTKYPISKCKSNPSFEALKSKFDKD.

The 251-residue stretch at 758-1008 (LELTKEIGRG…QQIITYLENL (251 aa)) folds into the Protein kinase domain. Residues 764-772 (IGRGVSGVV) and Lys785 contribute to the ATP site. Asp878 serves as the catalytic Proton acceptor. Disordered regions lie at residues 1040 to 1074 (GGNS…ENKI), 1091 to 1266 (EVSK…SVGG), and 1287 to 1339 (ISSS…NNNN). The span at 1055 to 1073 (VSGSNNNESSTAVSLNENK) shows a compositional bias: polar residues. The span at 1107–1144 (SSSTSSSPSTLSAPQSPVGSTSPMGSTSTSPISNNNNR) shows a compositional bias: low complexity. Positions 1145–1162 (PTHDHQQPHQVKWERIVP) are enriched in basic and acidic residues. 3 stretches are compositionally biased toward low complexity: residues 1189–1232 (NNNN…SSGI), 1242–1266 (FLSS…SVGG), and 1295–1339 (NNNN…NNNN).

It belongs to the protein kinase superfamily. TKL Ser/Thr protein kinase family.

It catalyses the reaction L-seryl-[protein] + ATP = O-phospho-L-seryl-[protein] + ADP + H(+). It carries out the reaction L-threonyl-[protein] + ATP = O-phospho-L-threonyl-[protein] + ADP + H(+). The polypeptide is Probable serine/threonine-protein kinase DDB_G0268876 (Dictyostelium discoideum (Social amoeba)).